We begin with the raw amino-acid sequence, 47 residues long: MKKRSVSGCNITILAVVFSHLSAGNSPCGNQANVLCISRLEFVQYQS.

A signal peptide spans 1-24; that stretch reads MKKRSVSGCNITILAVVFSHLSAG.

In terms of tissue distribution, expressed in Peyer patches, spleen, thymus, liver and mesenteric lymph node. Expressed at high levels by dendritic cells, and at lower levels by T-cells, monocytes and B-cells.

Its subcellular location is the secreted. In terms of biological role, enhances IgA secretion from B-cells stimulated via CD40. The protein is IgA-inducing protein (IGIP) of Bos taurus (Bovine).